The following is a 225-amino-acid chain: 3-dehydroquinate dehydratase (225 aa).

3-dehydroquinate is bound by residues Ser6, 30 to 32, and Arg62; that span reads EWR. His118 (proton donor/acceptor) is an active-site residue. The active-site Schiff-base intermediate with substrate is Lys143. Arg186, Ser205, and Gln209 together coordinate 3-dehydroquinate.

This sequence belongs to the type-I 3-dehydroquinase family. Homodimer.

It catalyses the reaction 3-dehydroquinate = 3-dehydroshikimate + H2O. It participates in metabolic intermediate biosynthesis; chorismate biosynthesis; chorismate from D-erythrose 4-phosphate and phosphoenolpyruvate: step 3/7. In terms of biological role, involved in the third step of the chorismate pathway, which leads to the biosynthesis of aromatic amino acids. Catalyzes the cis-dehydration of 3-dehydroquinate (DHQ) and introduces the first double bond of the aromatic ring to yield 3-dehydroshikimate. In Streptococcus pneumoniae (strain ATCC 700669 / Spain 23F-1), this protein is 3-dehydroquinate dehydratase.